The primary structure comprises 1522 residues: Sodium channel protein 1 brain (1522 aa).

Residues 1 to 50 (MDEKYTAKNRDKTFVVIEKRFKKNIIHRFSAKRSLFLFTPRNPIRRLAVC) are Cytoplasmic-facing. Residues 41-342 (RNPIRRLAVC…VATAYELEVK (302 aa)) form an I repeat. The helical transmembrane segment at 51-70 (IATNVCFDYFLMFTIMINCV) threads the bilayer. Residues 71–77 (FLAMPDI) lie on the Extracellular side of the membrane. A helical transmembrane segment spans residues 78–99 (SEFAEYIFLGIYTMEMAIKLVA). Residues 100 to 112 (GGFFIDKYTYLRD) lie on the Cytoplasmic side of the membrane. A helical membrane pass occupies residues 113 to 134 (AWNCLDFTVIMISYITLLLQTI). Residues 135–143 (NDKVISDIT) are Extracellular-facing. The chain crosses the membrane as a helical; Voltage-sensor span at residues 144–167 (GLRTFRVLRALRTLSIIPGLKTMV). The Cytoplasmic portion of the chain corresponds to 168–179 (NALLRALRMLIS). Residues 180–201 (VLILILFCLWIFSQAGVQLFGG) form a helical membrane-spanning segment. The Extracellular segment spans residues 202–278 (ALRHKCVLQI…PNYGYTNFDS (77 aa)). A disulfide bridge links Cys207 with Cys255. 2 N-linked (GlcNAc...) asparagine glycosylation sites follow: Asn248 and Asn258. Residues 279–303 (IGWSMLISFQLLTQDYWEDVYNKVI) constitute an intramembrane region (pore-forming). Residues 304 to 308 (RAHSP) are Extracellular-facing. Residues 309 to 331 (WTVIYFIVINFFGSLYLMNLMLA) form a helical membrane-spanning segment. Topologically, residues 332 to 406 (VVATAYELEV…WLRVQSFAHC (75 aa)) are cytoplasmic. Residues 393–647 (CYNPWLRVQS…EQEVEVSSFA (255 aa)) form an II repeat. The helical transmembrane segment at 407 to 426 (IITDSFTEVFIIFIIVLNTV) threads the bilayer. The Extracellular portion of the chain corresponds to 427-442 (FLAMEHHGMSMELKNV). Residues 443-464 (LKVANYVFTTVFVLEAILKLLA) traverse the membrane as a helical segment. Over 465 to 472 (FNKQYFKS) the chain is Cytoplasmic. A helical transmembrane segment spans residues 473 to 491 (GWNICDLVVVVASLIDLGV). Over 492 to 498 (EGLKGVS) the chain is Extracellular. The helical; Voltage-sensor transmembrane segment at 499–522 (VFRSFRLLRVFHLAQSWTTMRLLL) threads the bilayer. Residues 523 to 531 (CIILNTLGS) are Cytoplasmic-facing. A helical transmembrane segment spans residues 532–553 (LGYLTIILIIVIYIFAVTGLQL). Residues 554–575 (FHTEYTPDKFRGEPVPRWNFND) are Extracellular-facing. An intramembrane region (pore-forming) is located at residues 576–596 (FLHSFMMVFRILCGEWIEPMY). Residues 597 to 607 (DCMRACNGLCF) are Extracellular-facing. An intrachain disulfide couples Cys598 to Cys606. A helical transmembrane segment spans residues 608–628 (LIFIPVTVFGKTLFFLFIGLV). At 629 to 777 (LGAFGSDTVE…WNNFRRQLMM (149 aa)) the chain is on the cytoplasmic side. The III repeat unit spans residues 770–1074 (NFRRQLMMVC…QNYYNTLKKL (305 aa)). The helical transmembrane segment at 778-797 (VCENKYFETGVLVIIFASSI) threads the bilayer. At 798–815 (LLAFEDIYLNEKPRLKLA) the chain is on the extracellular side. A helical membrane pass occupies residues 816-837 (IFYLDITFCLLFFLEMVLKLVA). The Cytoplasmic segment spans residues 838–846 (LGFVHYYTH). The helical transmembrane segment at 847 to 868 (FWTILDFTIVIITVISLAASGL) threads the bilayer. At 869 to 874 (GMEQIT) the chain is on the extracellular side. A helical; Voltage-sensor transmembrane segment spans residues 875-898 (AFRSLRTLRALRPLRAVSRWQGMK). Topologically, residues 899–915 (IIVNALMLSIPSIFNVL) are cytoplasmic. Residues 916–937 (LVCVVFWLIFAIMGVQLFAGKF) traverse the membrane as a helical segment. Residues 938 to 976 (YKCVNETNMRIPPTEVANKIECYNKNYTWVNSNVNFDNV) lie on the Extracellular side of the membrane. N-linked (GlcNAc...) asparagine glycans are attached at residues Asn942 and Asn963. Positions 977-998 (GGAFLALFQVATFEGWMEIMAD) form an intramembrane region, pore-forming. At 999-1009 (AVDVTEVDEQP) the chain is on the extracellular side. Residues 1010-1022 (KFEATVYYYFYFV) form a helical membrane-spanning segment. Residues 1023-1100 (LFIIFGSFFV…QAVVYDLVMS (78 aa)) lie on the Cytoplasmic side of the membrane. Phosphothreonine; by PKC is present on Thr1076. Residues 1083-1386 (VKRPKNKCQA…WEQYDPLATQ (304 aa)) form an IV repeat. Residues 1101–1120 (NQFEIFITTIIITNMIFMAF) traverse the membrane as a helical segment. Residues 1121-1132 (EHYNQSEVVTEV) are Extracellular-facing. A glycan (N-linked (GlcNAc...) asparagine) is linked at Asn1124. A helical transmembrane segment spans residues 1133-1154 (LATANIAFTILYAVEAIIKIIG). At 1155 to 1162 (LRIHYLRN) the chain is on the cytoplasmic side. The helical transmembrane segment at 1163–1184 (LWNVFDFLVVTLSVMDAFLNDI) threads the bilayer. At 1185 to 1194 (FGDGIFMNPS) the chain is on the extracellular side. Residues 1195-1218 (LLRVARMFRIGRIIRLIKWAKGMR) form a helical; Voltage-sensor membrane-spanning segment. The Cytoplasmic portion of the chain corresponds to 1219-1236 (KLLFALVISLPALFNIGA). Residues 1237-1258 (LLMLVMFIYTIIGMSSFGQIKL) form a helical membrane-spanning segment. The Extracellular portion of the chain corresponds to 1259-1270 (SGALNDQVNFQT). Positions 1271-1293 (FGKTFLLLVRLATSAGWNDILGP) form an intramembrane region, pore-forming. Residues 1294–1323 (LLIQPPNCDPNYITTSTGEKIKVVNGDCGM) lie on the Extracellular side of the membrane. Residues 1324–1346 (PWLAISYMVSYIIIVFMIVFNMY) form a helical membrane-spanning segment. Residues 1347 to 1522 (IAVILENFNQ…FIISAPETAV (176 aa)) lie on the Cytoplasmic side of the membrane.

The protein belongs to the sodium channel (TC 1.A.1.10) family.

Its subcellular location is the cell membrane. In terms of biological role, mediates the voltage-dependent sodium ion permeability of excitable membranes. Assuming opened or closed conformations in response to the voltage difference across the membrane, the protein forms a sodium-selective channel through which Na(+) ions may pass in accordance with their electrochemical gradient. The polypeptide is Sodium channel protein 1 brain (Heterololigo bleekeri (Spear squid)).